The sequence spans 769 residues: Cullin-3 (769 aa).

The interval 614–655 (DRELPSTTSSTTTTTTTATSSSTSTSPSSSSSSISTPTPSKS) is disordered. The segment covering 618-653 (PSTTSSTTTTTTTATSSSTSTSPSSSSSSISTPTPS) has biased composition (low complexity). The 63-residue stretch at 699–761 (DRKHQIEASI…REYLERSKQD (63 aa)) folds into the Cullin neddylation domain. K713 is covalently cross-linked (Glycyl lysine isopeptide (Lys-Gly) (interchain with G-Cter in NEDD8)).

The protein belongs to the cullin family. Post-translationally, neddylated. Deneddylated via its interaction with the COP9 signalosome (CSN) complex.

It is found in the nucleus. Its pathway is protein modification; protein ubiquitination. Its function is as follows. Probable core component of cullin-based SCF-like E3 ubiquitin-protein ligase complexes which mediate the ubiquitination and subsequent proteasomal degradation of target proteins. The E3 ubiquitin-protein ligase activity of the complex is dependent on the neddylation of the cullin subunit. This Dictyostelium discoideum (Social amoeba) protein is Cullin-3 (culC).